The following is a 90-amino-acid chain: Small ribosomal subunit protein uS15c (90 aa).

The protein belongs to the universal ribosomal protein uS15 family. In terms of assembly, part of the 30S ribosomal subunit.

Its subcellular location is the plastid. The protein resides in the chloroplast. The chain is Small ribosomal subunit protein uS15c (rps15) from Platanus occidentalis (Sycamore).